The sequence spans 264 residues: Indole-3-glycerol phosphate synthase (264 aa).

It belongs to the TrpC family.

It catalyses the reaction 1-(2-carboxyphenylamino)-1-deoxy-D-ribulose 5-phosphate + H(+) = (1S,2R)-1-C-(indol-3-yl)glycerol 3-phosphate + CO2 + H2O. It participates in amino-acid biosynthesis; L-tryptophan biosynthesis; L-tryptophan from chorismate: step 4/5. The protein is Indole-3-glycerol phosphate synthase of Xylella fastidiosa (strain 9a5c).